The sequence spans 319 residues: Acetyl-coenzyme A carboxylase carboxyl transferase subunit alpha (319 aa).

The region spanning 35 to 296 (NLDEEVQRLR…KAQLLADLSD (262 aa)) is the CoA carboxyltransferase C-terminal domain.

Belongs to the AccA family. In terms of assembly, acetyl-CoA carboxylase is a heterohexamer composed of biotin carboxyl carrier protein (AccB), biotin carboxylase (AccC) and two subunits each of ACCase subunit alpha (AccA) and ACCase subunit beta (AccD).

It localises to the cytoplasm. It catalyses the reaction N(6)-carboxybiotinyl-L-lysyl-[protein] + acetyl-CoA = N(6)-biotinyl-L-lysyl-[protein] + malonyl-CoA. Its pathway is lipid metabolism; malonyl-CoA biosynthesis; malonyl-CoA from acetyl-CoA: step 1/1. In terms of biological role, component of the acetyl coenzyme A carboxylase (ACC) complex. First, biotin carboxylase catalyzes the carboxylation of biotin on its carrier protein (BCCP) and then the CO(2) group is transferred by the carboxyltransferase to acetyl-CoA to form malonyl-CoA. This chain is Acetyl-coenzyme A carboxylase carboxyl transferase subunit alpha, found in Yersinia enterocolitica serotype O:8 / biotype 1B (strain NCTC 13174 / 8081).